Here is a 539-residue protein sequence, read N- to C-terminus: Histone-arginine methyltransferase CARMER (539 aa).

Positions 149-458 constitute an SAM-dependent MTase PRMT-type domain; that stretch reads ASQYFQFYGY…QSYDVTIDLH (310 aa). The S-adenosyl-L-methionine site is built by Q162, R171, G195, E217, E246, and T274. R509 carries the post-translational modification Asymmetric dimethylarginine; by autocatalysis.

It belongs to the class I-like SAM-binding methyltransferase superfamily. Protein arginine N-methyltransferase family. Homodimer. Post-translationally, the dimethylated protein is the major form.

The protein resides in the cytoplasm. Its subcellular location is the nucleus. The catalysed reaction is L-arginyl-[protein] + 2 S-adenosyl-L-methionine = N(omega),N(omega)-dimethyl-L-arginyl-[protein] + 2 S-adenosyl-L-homocysteine + 2 H(+). Methylates (mono- and asymmetric dimethylation) the guanidino nitrogens of arginyl residues in proteins. May methylate histone H3 at 'Arg-17' and activate transcription via chromatin remodeling. In Drosophila mojavensis (Fruit fly), this protein is Histone-arginine methyltransferase CARMER (Art4).